The chain runs to 378 residues: Acetylornithine deacetylase (378 aa).

Residue His-76 coordinates Zn(2+). Residue Asp-78 is part of the active site. Asp-108 is a Zn(2+) binding site. Glu-140 is an active-site residue. 3 residues coordinate Zn(2+): Glu-141, Glu-165, and His-351.

The protein belongs to the peptidase M20A family. ArgE subfamily. Homodimer. Zn(2+) is required as a cofactor. Requires Co(2+) as cofactor. Glutathione serves as cofactor.

The protein resides in the cytoplasm. The catalysed reaction is N(2)-acetyl-L-ornithine + H2O = L-ornithine + acetate. The protein operates within amino-acid biosynthesis; L-arginine biosynthesis; L-ornithine from N(2)-acetyl-L-ornithine (linear): step 1/1. Catalyzes the hydrolysis of the amide bond of N(2)-acetylated L-amino acids. Cleaves the acetyl group from N-acetyl-L-ornithine to form L-ornithine, an intermediate in L-arginine biosynthesis pathway, and a branchpoint in the synthesis of polyamines. The chain is Acetylornithine deacetylase from Aliivibrio fischeri (strain MJ11) (Vibrio fischeri).